The following is a 369-amino-acid chain: UDP-3-O-acylglucosamine N-acyltransferase (369 aa).

Residue His-263 is the Proton acceptor of the active site.

Belongs to the transferase hexapeptide repeat family. LpxD subfamily. In terms of assembly, homotrimer.

It catalyses the reaction a UDP-3-O-[(3R)-3-hydroxyacyl]-alpha-D-glucosamine + a (3R)-hydroxyacyl-[ACP] = a UDP-2-N,3-O-bis[(3R)-3-hydroxyacyl]-alpha-D-glucosamine + holo-[ACP] + H(+). It functions in the pathway bacterial outer membrane biogenesis; LPS lipid A biosynthesis. In terms of biological role, catalyzes the N-acylation of UDP-3-O-acylglucosamine using 3-hydroxyacyl-ACP as the acyl donor. Is involved in the biosynthesis of lipid A, a phosphorylated glycolipid that anchors the lipopolysaccharide to the outer membrane of the cell. The polypeptide is UDP-3-O-acylglucosamine N-acyltransferase (Burkholderia vietnamiensis (strain G4 / LMG 22486) (Burkholderia cepacia (strain R1808))).